A 462-amino-acid polypeptide reads, in one-letter code: Glycine--tRNA ligase (462 aa).

Residues R100 and E174 each contribute to the substrate site. ATP is bound by residues 206-208 (RNE), 216-221 (FRTREF), 290-291 (EL), and 334-337 (GADR). Residue 221 to 225 (FEQME) participates in substrate binding. Residue 330-334 (EPSLG) coordinates substrate.

The protein belongs to the class-II aminoacyl-tRNA synthetase family. As to quaternary structure, homodimer.

The protein localises to the cytoplasm. The catalysed reaction is tRNA(Gly) + glycine + ATP = glycyl-tRNA(Gly) + AMP + diphosphate. Functionally, catalyzes the attachment of glycine to tRNA(Gly). This Ruminiclostridium cellulolyticum (strain ATCC 35319 / DSM 5812 / JCM 6584 / H10) (Clostridium cellulolyticum) protein is Glycine--tRNA ligase.